The chain runs to 426 residues: MAIAQLATEYVFSDFLLKEPTEPKFKGLRLELAVDKMVTCIAVGLPLLLISLAFAQEISIGTQISCFSPSSFSWRQAAFVDSYCWAAVQQKNSLQSESGNLPLWLHKFFPYILLLFAILLYLPPLFWRFAAAPHICSDLKFIMEELDKVYNRAIKAAKSARDLDMRDGACSVPGVTENLGQSLWEVSESHFKYPIVEQYLKTKKNSNNLIIKYISCRLLTLIIILLACIYLGYYFSLSSLSDEFVCSIKSGILRNDSTVPDQFQCKLIAVGIFQLLSVINLVVYVLLAPVVVYTLFVPFRQKTDVLKVYEILPTFDVLHFKSEGYNDLSLYNLFLEENISEVKSYKCLKVLENIKSSGQGIDPMLLLTNLGMIKMDVVDGKTPMSAEMREEQGNQTAELQGMNIDSETKANNGEKNARQRLLDSSC.

Over 1-40 (MAIAQLATEYVFSDFLLKEPTEPKFKGLRLELAVDKMVTC) the chain is Cytoplasmic. At Cys40 the chain carries S-nitrosocysteine. The chain crosses the membrane as a helical span at residues 41–61 (IAVGLPLLLISLAFAQEISIG). The Extracellular portion of the chain corresponds to 62–106 (TQISCFSPSSFSWRQAAFVDSYCWAAVQQKNSLQSESGNLPLWLH). Disulfide bonds link Cys66–Cys265 and Cys84–Cys246. Residues 107 to 127 (KFFPYILLLFAILLYLPPLFW) form a helical membrane-spanning segment. At 128-217 (RFAAAPHICS…NLIIKYISCR (90 aa)) the chain is on the cytoplasmic side. The residue at position 199 (Tyr199) is a Phosphotyrosine. A helical membrane pass occupies residues 218–238 (LLTLIIILLACIYLGYYFSLS). The Extracellular segment spans residues 239 to 266 (SLSDEFVCSIKSGILRNDSTVPDQFQCK). N-linked (GlcNAc...) asparagine glycosylation occurs at Asn255. The chain crosses the membrane as a helical span at residues 267 to 287 (LIAVGIFQLLSVINLVVYVLL). At 288-426 (APVVVYTLFV…ARQRLLDSSC (139 aa)) the chain is on the cytoplasmic side. An S-nitrosocysteine modification is found at Cys347. Residues 405 to 414 (DSETKANNGE) show a composition bias toward polar residues. The disordered stretch occupies residues 405–426 (DSETKANNGEKNARQRLLDSSC). Residues 415–426 (KNARQRLLDSSC) are compositionally biased toward basic and acidic residues.

This sequence belongs to the pannexin family. In terms of assembly, homoheptameric. S-nitrosylation inhibits channel currents and ATP release. Post-translationally, N-glycosylation plays a role in cell surface targeting. Glycosylation at its extracellular surface makes unlikely that two oligomers could dock to form an intercellular channel such as in gap junctions. Exists in three glycosylation states: non-glycosylated (GLY0), high-mannose glycosylated (GLY1), and fully mature glycosylated (GLY2). In terms of processing, cleaved by CASP3 and CASP7 during apoptosis. Cleavage opens the channel for the release of metabolites and induces plasma membrane permeability during apoptosis. Phosphorylated at Tyr-199 by SRC. Phosphorylation activates ATP release. Constitutively phosphorylated in vascular smooth muscle cells. Widely expressed. Highest expression is observed in oocytes and brain. Detected at very low levels in sperm cells.

It localises to the cell membrane. The protein resides in the endoplasmic reticulum membrane. It carries out the reaction chloride(in) = chloride(out). The enzyme catalyses iodide(out) = iodide(in). The catalysed reaction is ATP(in) = ATP(out). It catalyses the reaction K(+)(in) = K(+)(out). It carries out the reaction Ca(2+)(in) = Ca(2+)(out). The enzyme catalyses Na(+)(in) = Na(+)(out). The catalysed reaction is nitrate(in) = nitrate(out). It catalyses the reaction L-aspartate(out) = L-aspartate(in). It carries out the reaction L-glutamate(out) = L-glutamate(in). The enzyme catalyses D-gluconate(in) = D-gluconate(out). The catalysed reaction is spermidine(in) = spermidine(out). Ion channel involved in a variety of physiological functions such as blood pressure regulation, apoptotic cell clearance and oogenesis. Forms anion-selective channels with relatively low conductance and an order of permeabilities: nitrate&gt;iodide&gt;chlroride&gt;&gt;aspartate=glutamate=gluconate. Can release ATP upon activation through phosphorylation or cleavage at C-terminus. May play a role as a Ca(2+)-leak channel to regulate ER Ca(2+) homeostasis. Functionally, during apoptosis, the C terminal tail is cleaved by caspases, which opens the main pore acting as a large-pore ATP efflux channel with a broad distribution, which allows the regulated release of molecules and ions smaller than 1 kDa, such as nucleotides ATP and UTP, and selective plasma membrane permeability to attract phagocytes that engulf the dying cells. This Homo sapiens (Human) protein is Pannexin-1.